The primary structure comprises 151 residues: 3-hydroxyacyl-[acyl-carrier-protein] dehydratase FabZ (151 aa).

H54 is a catalytic residue.

Belongs to the thioester dehydratase family. FabZ subfamily.

Its subcellular location is the cytoplasm. The catalysed reaction is a (3R)-hydroxyacyl-[ACP] = a (2E)-enoyl-[ACP] + H2O. In terms of biological role, involved in unsaturated fatty acids biosynthesis. Catalyzes the dehydration of short chain beta-hydroxyacyl-ACPs and long chain saturated and unsaturated beta-hydroxyacyl-ACPs. This Erwinia tasmaniensis (strain DSM 17950 / CFBP 7177 / CIP 109463 / NCPPB 4357 / Et1/99) protein is 3-hydroxyacyl-[acyl-carrier-protein] dehydratase FabZ.